We begin with the raw amino-acid sequence, 168 residues long: Photosystem I assembly protein Ycf3 (168 aa).

TPR repeat units lie at residues 35-68, 72-105, and 120-153; these read AFTY…EMDP, SYIL…NPFL, and GEQA…TPGN.

This sequence belongs to the Ycf3 family.

Its subcellular location is the plastid. The protein localises to the chloroplast thylakoid membrane. Its function is as follows. Essential for the assembly of the photosystem I (PSI) complex. May act as a chaperone-like factor to guide the assembly of the PSI subunits. This is Photosystem I assembly protein Ycf3 from Plantago lanceolata (English plantain).